The chain runs to 607 residues: V-type proton ATPase catalytic subunit A (607 aa).

Position 251–258 (251–258 (GAFGCGKT)) interacts with ATP.

This sequence belongs to the ATPase alpha/beta chains family. In terms of assembly, V-ATPase is a heteromultimeric enzyme composed of a peripheral catalytic V1 complex (components A to H) attached to an integral membrane V0 proton pore complex (components: a, c, c', c'', d, e, f and VOA1).

The protein resides in the vacuole membrane. The enzyme catalyses ATP + H2O + 4 H(+)(in) = ADP + phosphate + 5 H(+)(out). Its function is as follows. Catalytic subunit of the V1 complex of vacuolar(H+)-ATPase (V-ATPase), a multisubunit enzyme composed of a peripheral complex (V1) that hydrolyzes ATP and a membrane integral complex (V0) that translocates protons. V-ATPase is responsible for acidifying and maintaining the pH of intracellular compartments. This is V-type proton ATPase catalytic subunit A (VMA1) from Encephalitozoon cuniculi (strain GB-M1) (Microsporidian parasite).